We begin with the raw amino-acid sequence, 554 residues long: Wee1-like protein kinase 2-B (554 aa).

2 disordered regions span residues 1–86 and 145–182; these read MRMA…GGEC and TLVN…DSQM. Serine 38 carries the post-translational modification Phosphoserine. Polar residues-rich tracts occupy residues 38 to 48 and 147 to 163; these read SPVSSWRTNNC and VNVN…THFQ. Residues 213-487 form the Protein kinase domain; the sequence is FLEIEKIGAG…AKNSVLRRCV (275 aa). ATP is bound by residues 219 to 227 and lysine 242; that span reads IGAGEFGSV. Aspartate 340 functions as the Proton acceptor in the catalytic mechanism. Positions 345 and 377 each coordinate Mg(2+). Positions 490 to 516 form a coiled coil; it reads AAELQKQLNVEKFKTAMLERELQAAKL.

It belongs to the protein kinase superfamily. Ser/Thr protein kinase family. WEE1 subfamily. As to quaternary structure, interacts with cdca3. In terms of processing, ubiquitinated and degraded at the onset of G2/M phase. Post-translationally, phosphorylated during M and G1 phases. Interacts with cdca3 when phosphorylated at Ser-38.

It localises to the nucleus. It catalyses the reaction L-tyrosyl-[protein] + ATP = O-phospho-L-tyrosyl-[protein] + ADP + H(+). Functionally, oocyte and early embryo-specific protein tyrosine kinase that phosphorylates and inhibits cdk1 and acts as a regulator of meiosis in oocytes. Required to ensure the meiotic cell cycle in oocytes by phosphorylating cdk1 at 'Tyr-15', leading to inhibit cdk1 activity and prevent meiosis. This is Wee1-like protein kinase 2-B (wee2-b) from Xenopus laevis (African clawed frog).